The sequence spans 212 residues: Protein-L-isoaspartate O-methyltransferase (212 aa).

S60 is a catalytic residue.

The protein belongs to the methyltransferase superfamily. L-isoaspartyl/D-aspartyl protein methyltransferase family.

It localises to the cytoplasm. It carries out the reaction [protein]-L-isoaspartate + S-adenosyl-L-methionine = [protein]-L-isoaspartate alpha-methyl ester + S-adenosyl-L-homocysteine. Functionally, catalyzes the methyl esterification of L-isoaspartyl residues in peptides and proteins that result from spontaneous decomposition of normal L-aspartyl and L-asparaginyl residues. It plays a role in the repair and/or degradation of damaged proteins. In Methanococcus maripaludis (strain C5 / ATCC BAA-1333), this protein is Protein-L-isoaspartate O-methyltransferase.